A 63-amino-acid polypeptide reads, in one-letter code: Large ribosomal subunit protein bL32c (63 aa).

A disordered region spans residues 39-63; the sequence is SFSSGNEHPKPKGFSGQQTNNKIFE. Positions 53–63 are enriched in polar residues; the sequence is SGQQTNNKIFE.

The protein belongs to the bacterial ribosomal protein bL32 family.

It localises to the plastid. It is found in the chloroplast. The chain is Large ribosomal subunit protein bL32c from Triticum aestivum (Wheat).